We begin with the raw amino-acid sequence, 150 residues long: Ribosome maturation factor RimP (150 aa).

The protein belongs to the RimP family.

Its subcellular location is the cytoplasm. Required for maturation of 30S ribosomal subunits. The protein is Ribosome maturation factor RimP of Acaryochloris marina (strain MBIC 11017).